An 847-amino-acid polypeptide reads, in one-letter code: Glucans biosynthesis glucosyltransferase H (847 aa).

Topologically, residues 1-138 (MNKTTEYIDA…KWRTVGTIRR (138 aa)) are cytoplasmic. The helical transmembrane segment at 139 to 156 (YILLILTLAQTVVATWYM) threads the bilayer. Topologically, residues 157–193 (KTILPYQGWALINPMDMVGQDVWVSFMQLLPYMLQTG) are periplasmic. Residues 194-216 (ILILFAVLFCWVSAGFWTALMGF) form a helical membrane-spanning segment. Residues 217 to 511 (LQLLIGRDKY…LVKGMHPVHR (295 aa)) are Cytoplasmic-facing. Residues 512 to 534 (AVFLTGVMSYLSAPLWFMFLALS) form a helical membrane-spanning segment. Over 535–567 (TALQVVHALTEPQYFLQPRQLFPVWPQWRPELA) the chain is Periplasmic. The chain crosses the membrane as a helical span at residues 568–590 (IALFASTMVLLFLPKLLSILLIW). At 591–602 (CKGTKEYGGFWR) the chain is on the cytoplasmic side. The chain crosses the membrane as a helical span at residues 603–625 (VTLSLLLEVLFSVLLAPVRMLFH). The Periplasmic segment spans residues 626–679 (TVFVVSAFLGWEVVWNSPQRDDDSTSWGEAFKRHGSQLLLGLVWAVGMAWLDLR). Residues 680-702 (FLFWLAPIVFSLILSPFVSVISS) traverse the membrane as a helical segment. The Cytoplasmic segment spans residues 703-847 (RATVGLRTKR…ALRKPDAASQ (145 aa)).

Belongs to the glycosyltransferase 2 family. OpgH subfamily.

The protein localises to the cell inner membrane. The protein operates within glycan metabolism; osmoregulated periplasmic glucan (OPG) biosynthesis. Involved in the biosynthesis of osmoregulated periplasmic glucans (OPGs). This Escherichia coli O6:H1 (strain CFT073 / ATCC 700928 / UPEC) protein is Glucans biosynthesis glucosyltransferase H.